A 365-amino-acid chain; its full sequence is Gibberellin 20 oxidase 1-A (365 aa).

A Fe2OG dioxygenase domain is found at 199–299; the sequence is GNDSIMRLNY…RKSLAFFLCP (101 aa). Fe cation is bound by residues histidine 224, aspartate 226, and histidine 280. Arginine 290 is an active-site residue.

This sequence belongs to the iron/ascorbate-dependent oxidoreductase family. GA20OX subfamily. Fe cation serves as cofactor. The cofactor is L-ascorbate. In terms of tissue distribution, expressed in nodes and the ear of the elongating stem.

It catalyses the reaction gibberellin A12 + 2 2-oxoglutarate + 3 O2 + H(+) = gibberellin A9 + 2 succinate + 3 CO2 + 2 H2O. The enzyme catalyses gibberellin A53 + 2 2-oxoglutarate + 3 O2 + H(+) = gibberellin A20 + 2 succinate + 3 CO2 + 2 H2O. Key oxidase enzyme in the biosynthesis of gibberellin that catalyzes the conversion of GA12 and GA53 to GA9 and GA20 respectively, via a three-step oxidation at C-20 of the GA skeleton. This chain is Gibberellin 20 oxidase 1-A (GA20ox1A), found in Triticum aestivum (Wheat).